Reading from the N-terminus, the 365-residue chain is DNA replication and repair protein RecF (365 aa).

30–37 (GRNAQGKT) contacts ATP.

The protein belongs to the RecF family.

The protein resides in the cytoplasm. In terms of biological role, the RecF protein is involved in DNA metabolism; it is required for DNA replication and normal SOS inducibility. RecF binds preferentially to single-stranded, linear DNA. It also seems to bind ATP. In Streptococcus pneumoniae (strain CGSP14), this protein is DNA replication and repair protein RecF.